A 1143-amino-acid polypeptide reads, in one-letter code: Disease resistance protein Pik-1 (1143 aa).

A structured coiled coil (CC) domain region spans residues 1 to 190 (MEAAAMAVTA…PLRIMGGEMQ (190 aa)). One can recognise an HMA domain in the interval 189–258 (MQKIVFKIPM…KVGHAELLQV (70 aa)). An HMA-like domain region spans residues 191 to 264 (KIVFKIPMVD…LLQVSQVKED (74 aa)). The region spanning 282–570 (HEVKTICILG…WIAEGFVSEE (289 aa)) is the NB-ARC domain. LRR repeat units follow at residues 681–706 (FKRL…ICEQ), 708–731 (SLRV…MRKL), 732–754 (KHLE…IGEL), 756–777 (HLRI…IREL), 778–800 (QHLH…VGKL), 802–823 (NLKI…IGEL), 824–848 (NHLQ…QISQ), 945–968 (MPNL…INGT), 979–1002 (DSRL…EFKF), and 1004–1027 (AGPA…VFRC).

Belongs to the disease resistance NB-LRR family. Interacts with AVR-Pik through its N-terminal part containing the HMA-like domain.

Functionally, disease resistance (R) protein that specifically recognizes the AVR-Pik effector avirulence protein from M.oryzae. Resistance proteins guard the plant against pathogens that contain an appropriate avirulence protein via an indirect interaction with this avirulence protein. That triggers a defense system including the hypersensitive response, which restricts the pathogen growth. Contribution of Pik-2 is required to recognize the effector avirulence protein AVR-Pik. This chain is Disease resistance protein Pik-1, found in Oryza sativa subsp. japonica (Rice).